The chain runs to 382 residues: Alkane 1-monooxygenase 1 (382 aa).

The next 4 helical transmembrane spans lie at 10–30 (MLAI…SMPF), 43–63 (FWAF…DMLF), 90–110 (LATV…FVAF), and 121–141 (WILS…HELI). Residues His138 and His142 each contribute to the Fe cation site. A helical membrane pass occupies residues 146–166 (ALEQAAGGILLAAVCYAGFKV). Positions 168, 172, and 173 each coordinate Fe cation. A helical transmembrane segment spans residues 236–256 (LALLVGFGWAFGWLGMVFFLG). Positions 312, 315, and 316 each coordinate Fe cation.

This sequence belongs to the fatty acid desaturase type 1 family. AlkB subfamily. It depends on Fe(3+) as a cofactor.

It is found in the cell inner membrane. The enzyme catalyses octane + 2 reduced [rubredoxin] + O2 + 2 H(+) = 2 oxidized [rubredoxin] + octan-1-ol + H2O. It functions in the pathway hydrocarbon metabolism; alkane degradation. Functionally, catalyzes the hydroxylation of n-alkanes in the presence of a NADH-rubredoxin reductase and rubredoxin. It preferably hydroxylases C16-C24 hydrocarbons. This is Alkane 1-monooxygenase 1 (alkB1) from Pseudomonas aeruginosa (strain ATCC 15692 / DSM 22644 / CIP 104116 / JCM 14847 / LMG 12228 / 1C / PRS 101 / PAO1).